Reading from the N-terminus, the 348-residue chain is Anthranilate phosphoribosyltransferase (348 aa).

5-phospho-alpha-D-ribose 1-diphosphate-binding positions include G89, 92-93, T97, 99-102, 117-125, and S129; these read GD, NIST, and KHGNRSASS. Position 89 (G89) interacts with anthranilate. S101 provides a ligand contact to Mg(2+). Residue N120 participates in anthranilate binding. R175 contacts anthranilate. Mg(2+) is bound by residues D234 and E235.

This sequence belongs to the anthranilate phosphoribosyltransferase family. Homodimer. Mg(2+) serves as cofactor.

The enzyme catalyses N-(5-phospho-beta-D-ribosyl)anthranilate + diphosphate = 5-phospho-alpha-D-ribose 1-diphosphate + anthranilate. It participates in amino-acid biosynthesis; L-tryptophan biosynthesis; L-tryptophan from chorismate: step 2/5. Functionally, catalyzes the transfer of the phosphoribosyl group of 5-phosphorylribose-1-pyrophosphate (PRPP) to anthranilate to yield N-(5'-phosphoribosyl)-anthranilate (PRA). This is Anthranilate phosphoribosyltransferase from Synechocystis sp. (strain ATCC 27184 / PCC 6803 / Kazusa).